A 303-amino-acid polypeptide reads, in one-letter code: tRNA dimethylallyltransferase 1 (303 aa).

17–24 (GPTACGKT) provides a ligand contact to ATP. 19–24 (TACGKT) contacts substrate. Residues 42–45 (DSRQ) are interaction with substrate tRNA.

The protein belongs to the IPP transferase family. Monomer. Requires Mg(2+) as cofactor.

The catalysed reaction is adenosine(37) in tRNA + dimethylallyl diphosphate = N(6)-dimethylallyladenosine(37) in tRNA + diphosphate. Functionally, catalyzes the transfer of a dimethylallyl group onto the adenine at position 37 in tRNAs that read codons beginning with uridine, leading to the formation of N6-(dimethylallyl)adenosine (i(6)A). The sequence is that of tRNA dimethylallyltransferase 1 from Hahella chejuensis (strain KCTC 2396).